We begin with the raw amino-acid sequence, 372 residues long: Oxoglutarate-dependent flavonoid 7-O-demethylase 1 (372 aa).

The 101-residue stretch at 221–321 folds into the Fe2OG dioxygenase domain; sequence GIQALRMNYY…RLSVAAFLNP (101 aa). 3 residues coordinate Fe cation: His-245, Asp-247, and His-302. A 2-oxoglutarate-binding site is contributed by Arg-312.

Belongs to the iron/ascorbate-dependent oxidoreductase family. Monomer. Requires Fe(2+) as cofactor. L-ascorbate serves as cofactor. In terms of tissue distribution, accumulates in the trichomes of nevadensin-accumulating strains (e.g. cv. SD and cv. EMX-1) and in cv. SW (at protein level) but not in cv. MC.

The protein resides in the cytoplasm. The catalysed reaction is gardenin B + 2-oxoglutarate + O2 = nevadensin + formaldehyde + succinate + CO2 + H(+). It catalyses the reaction 8-hydroxysalvigenin + 2-oxoglutarate + O2 = pilosin + formaldehyde + succinate + CO2. It participates in flavonoid metabolism. Its activity is regulated as follows. Inhibited by prohexadione-calcium, a 2-oxoglutarate-dependent dioxygenase (2-ODD) inhibitor, thus leading to a decreased abundance of nevadensin (NEV) and absence of pilosin (PIL) production, but to the accumulation of gardenin B (GARD B) and 8-hydroxysalvigenin (8-OH-SALV). Functionally, oxoglutarate-dependent dioxygenase (2-ODD) acting as a flavonoid 7-O-demethylase involved in the biosynthesis of polymethoxylated flavonoids natural products such as nevadensin and salvigenin, aroma compounds which contribute to the flavor of sweet basil, and exhibit pharmacological activities such as anti-allergic, anti-oxidant, antibacterial, anti-proliferative, and anti-inflammatory effects. Catalyzes the 7-O-demethylation of methoxylated flavones; mediates the conversion of 8-hydroxysalvigenin (8-OH-SALV) to pilosin (PIL) and of gardenin B (GARD B) to nevadensin (NEV). This Ocimum basilicum (Sweet basil) protein is Oxoglutarate-dependent flavonoid 7-O-demethylase 1.